Reading from the N-terminus, the 95-residue chain is Putative pterin-4-alpha-carbinolamine dehydratase (95 aa).

It belongs to the pterin-4-alpha-carbinolamine dehydratase family.

The catalysed reaction is (4aS,6R)-4a-hydroxy-L-erythro-5,6,7,8-tetrahydrobiopterin = (6R)-L-erythro-6,7-dihydrobiopterin + H2O. This is Putative pterin-4-alpha-carbinolamine dehydratase from Nocardia farcinica (strain IFM 10152).